The chain runs to 1089 residues: Pentatricopeptide repeat-containing protein MRL1, chloroplastic (1089 aa).

The N-terminal 72 residues, 1-72 (MEVTSTTFIS…SIRSPRLVVR (72 aa)), are a transit peptide targeting the chloroplast. PPR repeat units follow at residues 466 to 500 (TMST…GMTA), 501 to 535 (DCKL…GVEA), 536 to 570 (NLHT…NVKP), 571 to 605 (DRVV…THPI), 608 to 642 (DHIS…GIRG), 643 to 677 (TPEV…DVTP), 678 to 712 (DEVF…GIRL), 713 to 747 (GTIS…KLRP), 748 to 782 (TIST…GLKP), and 783 to 817 (NTIT…GVSP).

The protein belongs to the PPR family. P subfamily. In terms of tissue distribution, expressed in stems, leaves and sepals.

Its subcellular location is the plastid. The protein resides in the chloroplast. Regulator of the large subunit (LS) of RuBisCO. Involved either in the processing or in the stabilization of the processed transcript, probably by acting as a barrier to the 5'&gt;3' degradation. The chain is Pentatricopeptide repeat-containing protein MRL1, chloroplastic (MRL1) from Arabidopsis thaliana (Mouse-ear cress).